A 105-amino-acid chain; its full sequence is Integration host factor (105 aa).

The H2TH motif, binds DNA motif lies at 64 to 71 (LPKVGKVK). The lid, binds DNA stretch occupies residues 82–94 (APTRRLRGLGDRQ).

It belongs to the actinobacterial IHF (aIHF) family. As to quaternary structure, binds DNA as a monomer. (Microbial infection) Forms a complex with L5 Int and attP DNA. The complex binds attB to form products.

The protein localises to the cytoplasm. It is found in the nucleoid. Its function is as follows. A nucleoid-associated protein (NAP) that binds DNA without any sequence specificity. Compacts DNA. Binds along the whole chromosome in a dynamic manner, has equal affinity for the oriC site, attB and a randon 62% GC-rich sequence. Plays a role in transcription regulation. In terms of biological role, (Microbial infection) Stimulates temperate Mycobacterium phage L5 Int-mediated recombination in vitro using supercoiled attP (phage attachment site) DNA, linear attB DNA (bacterial attachment site) and L5 integrase (L5 Int or Int-L5, AC P22884). mIHF acts on L5 Int to stimulate formation of a specific intasome complex. mIHF probably stabilizes a sharp bend in the DNA during phage integration. In Mycolicibacterium smegmatis (strain ATCC 700084 / mc(2)155) (Mycobacterium smegmatis), this protein is Integration host factor.